The chain runs to 75 residues: Beta-defensin 42 (75 aa).

Residues 1-21 form the signal peptide; it reads MNLRLSCLLFILVTSLPAGRC. 3 cysteine pairs are disulfide-bonded: C33-C60, C40-C54, and C44-C61.

This sequence belongs to the beta-defensin family. Epididymis-specific, with highest levels in the initial segment and distal caput.

It localises to the secreted. Has bactericidal activity. May play a role in the antimicrobial protection of sperm and urogenital tract epithelia. This Mus musculus (Mouse) protein is Beta-defensin 42.